The primary structure comprises 163 residues: UPF0260 protein GOX1406 (163 aa).

It belongs to the UPF0260 family.

This Gluconobacter oxydans (strain 621H) (Gluconobacter suboxydans) protein is UPF0260 protein GOX1406.